Reading from the N-terminus, the 276-residue chain is Formamidopyrimidine-DNA glycosylase (276 aa).

Residue proline 2 is the Schiff-base intermediate with DNA of the active site. Glutamate 3 serves as the catalytic Proton donor. Lysine 58 (proton donor; for beta-elimination activity) is an active-site residue. The DNA site is built by histidine 92, arginine 111, and lysine 154. The FPG-type zinc-finger motif lies at 239–273 (QVYGHVGEECPRCGNIFEKIKVSGRGTTFCPHCQV). Arginine 263 functions as the Proton donor; for delta-elimination activity in the catalytic mechanism.

Belongs to the FPG family. As to quaternary structure, monomer. Zn(2+) is required as a cofactor.

It catalyses the reaction Hydrolysis of DNA containing ring-opened 7-methylguanine residues, releasing 2,6-diamino-4-hydroxy-5-(N-methyl)formamidopyrimidine.. It carries out the reaction 2'-deoxyribonucleotide-(2'-deoxyribose 5'-phosphate)-2'-deoxyribonucleotide-DNA = a 3'-end 2'-deoxyribonucleotide-(2,3-dehydro-2,3-deoxyribose 5'-phosphate)-DNA + a 5'-end 5'-phospho-2'-deoxyribonucleoside-DNA + H(+). In terms of biological role, involved in base excision repair of DNA damaged by oxidation or by mutagenic agents. Acts as a DNA glycosylase that recognizes and removes damaged bases. Has a preference for oxidized purines, such as 7,8-dihydro-8-oxoguanine (8-oxoG). Has AP (apurinic/apyrimidinic) lyase activity and introduces nicks in the DNA strand. Cleaves the DNA backbone by beta-delta elimination to generate a single-strand break at the site of the removed base with both 3'- and 5'-phosphates. This chain is Formamidopyrimidine-DNA glycosylase, found in Lactobacillus acidophilus (strain ATCC 700396 / NCK56 / N2 / NCFM).